The primary structure comprises 343 residues: Heat-inducible transcription repressor HrcA (343 aa).

The protein belongs to the HrcA family.

Functionally, negative regulator of class I heat shock genes (grpE-dnaK-dnaJ and groELS operons). Prevents heat-shock induction of these operons. This Leptospira biflexa serovar Patoc (strain Patoc 1 / Ames) protein is Heat-inducible transcription repressor HrcA.